Here is a 1030-residue protein sequence, read N- to C-terminus: Teashirt homolog 2 (1030 aa).

Residues 1–120 (MPRRKQQAPK…THPKLPSEPH (120 aa)) form a disordered region. Residues 11–42 (RAAGYAQEEVLKEEEEIKEEEEEEEDSGSVAQ) adopt a coiled-coil conformation. A compositionally biased stretch (acidic residues) spans 21–37 (LKEEEEIKEEEEEEEDS). 2 stretches are compositionally biased toward polar residues: residues 39 to 49 (SVAQHQSSNDT) and 66 to 95 (SCQN…QVSD). The segment covering 103-120 (DVSDKKANTHPKLPSEPH) has biased composition (basic and acidic residues). K189 is covalently cross-linked (Glycyl lysine isopeptide (Lys-Gly) (interchain with G-Cter in SUMO2)). 2 C2H2-type zinc fingers span residues 216-240 (FRCR…ETGH) and 276-300 (LKCM…KTKH). The interval 240-266 (HYQDDNRKKDKLRPTSYSKPRKRAFQD) is disordered. Glycyl lysine isopeptide (Lys-Gly) (interchain with G-Cter in SUMO2) cross-links involve residues K307 and K316. The interval 328-348 (VNRPCSPDSTTGSLADSFSSQ) is disordered. The span at 334–348 (PDSTTGSLADSFSSQ) shows a compositional bias: polar residues. The C2H2-type 3; atypical zinc finger occupies 381–405 (LKCMECGSSHDTLQQLTTHMMVTGH). A Glycyl lysine isopeptide (Lys-Gly) (interchain with G-Cter in SUMO2) cross-link involves residue K418. Residues 432 to 459 (SLSETPNSESLAPKPSSNSPSECTASTT) are compositionally biased toward polar residues. The segment at 432-488 (SLSETPNSESLAPKPSSNSPSECTASTTELKKESKKEKGEGIEDEQGVKSEDYEDSL) is disordered. The span at 460–482 (ELKKESKKEKGEGIEDEQGVKSE) shows a compositional bias: basic and acidic residues. Residues K462, K480, K497, and K601 each participate in a glycyl lysine isopeptide (Lys-Gly) (interchain with G-Cter in SUMO2) cross-link. 2 stretches are compositionally biased toward basic and acidic residues: residues 608-623 (DEVV…HEEA) and 633-664 (SFSK…KPEP). 3 disordered regions span residues 608–687 (DEVV…LPSI), 703–726 (KATE…VFHK), and 759–784 (QPID…SPPQ). K652 is covalently cross-linked (Glycyl lysine isopeptide (Lys-Gly) (interchain with G-Cter in SUMO2)). A compositionally biased stretch (low complexity) spans 710-722 (SPSCSSPNSSTSP). The span at 773 to 783 (SSQAQSCTSPP) shows a compositional bias: polar residues. Residues K796 and K816 each participate in a glycyl lysine isopeptide (Lys-Gly) (interchain with G-Cter in SUMO2) cross-link. A DNA-binding region (homeobox) is located at residues 837-907 (RKGRQSNWNP…NVKYQLRKTG (71 aa)). A C2H2-type 4 zinc finger spans residues 922–944 (FYCSDCASQFRTPSTYISHLESH). K962 is covalently cross-linked (Glycyl lysine isopeptide (Lys-Gly) (interchain with G-Cter in SUMO2)). Disordered stretches follow at residues 965-987 (QEIS…EDTD) and 1009-1030 (LSKT…VDEE). The span at 968-977 (SRVSSAQRSP) shows a compositional bias: polar residues. S976 carries the phosphoserine modification. Residues 990–1013 (FKCKLCRRTFVSKHAVKLHLSKTH) form a C2H2-type 5 zinc finger.

It belongs to the teashirt C2H2-type zinc-finger protein family. In terms of assembly, interacts (via homeobox domain) with APBB1 (via PID domain 1). Post-translationally, sumoylated.

It localises to the nucleus. Its function is as follows. Probable transcriptional regulator involved in developmental processes. May act as a transcriptional repressor (Potential). This chain is Teashirt homolog 2 (Tshz2), found in Mus musculus (Mouse).